A 248-amino-acid chain; its full sequence is Pyridoxal 4-dehydrogenase (248 aa).

11-35 (LVTGAAQGIGKAIAARLAADGATVI) contributes to the NAD(+) binding site. Substrate is bound at residue serine 141. Catalysis depends on tyrosine 154, which acts as the Proton acceptor.

This sequence belongs to the short-chain dehydrogenases/reductases (SDR) family. In terms of assembly, homotetramer.

It catalyses the reaction pyridoxal + NAD(+) = 4-pyridoxolactone + NADH + H(+). The protein operates within cofactor degradation; B6 vitamer degradation; 4-pyridoxate from pyridoxal: step 1/2. Its function is as follows. Involved in the degradation of pyridoxine or pyridoxamine (free, phosphate-unbound, forms of vitamin B6). Oxidizes pyridoxal to 4-pyridoxolactone, but does not have activity toward pyridoxal 5'-phosphate, pyridoxine, pyridoxamine, pyridoxamine 5'-phosphate, 4-phthalaldehyde, 2-nitrobenzaldehyde, pyridine, formaldehyde, 2-carboxybenzaldehyde or sugars. The chain is Pyridoxal 4-dehydrogenase from Mesorhizobium japonicum (strain LMG 29417 / CECT 9101 / MAFF 303099) (Mesorhizobium loti (strain MAFF 303099)).